Reading from the N-terminus, the 288-residue chain is ATP synthase gamma chain (288 aa).

It belongs to the ATPase gamma chain family. As to quaternary structure, F-type ATPases have 2 components, CF(1) - the catalytic core - and CF(0) - the membrane proton channel. CF(1) has five subunits: alpha(3), beta(3), gamma(1), delta(1), epsilon(1). CF(0) has three main subunits: a, b and c.

It localises to the cell membrane. Functionally, produces ATP from ADP in the presence of a proton gradient across the membrane. The gamma chain is believed to be important in regulating ATPase activity and the flow of protons through the CF(0) complex. The sequence is that of ATP synthase gamma chain from Staphylococcus aureus (strain Mu3 / ATCC 700698).